The chain runs to 366 residues: Quinolinate synthase (366 aa).

Iminosuccinate-binding residues include His-44 and Ser-61. Residue Cys-108 coordinates [4Fe-4S] cluster. Iminosuccinate contacts are provided by residues 139 to 141 (YIN) and Ser-160. Cys-228 is a binding site for [4Fe-4S] cluster. Residues 254 to 256 (HPE) and Thr-271 contribute to the iminosuccinate site. Cys-318 is a [4Fe-4S] cluster binding site.

This sequence belongs to the quinolinate synthase family. Type 3 subfamily. [4Fe-4S] cluster is required as a cofactor.

The protein resides in the cytoplasm. It catalyses the reaction iminosuccinate + dihydroxyacetone phosphate = quinolinate + phosphate + 2 H2O + H(+). Its pathway is cofactor biosynthesis; NAD(+) biosynthesis; quinolinate from iminoaspartate: step 1/1. In terms of biological role, catalyzes the condensation of iminoaspartate with dihydroxyacetone phosphate to form quinolinate. In Listeria innocua serovar 6a (strain ATCC BAA-680 / CLIP 11262), this protein is Quinolinate synthase.